The primary structure comprises 442 residues: O-acetyl-L-homoserine sulfhydrylase (442 aa).

The interval Met-1 to Ser-32 is disordered. The residue at position 216 (Lys-216) is an N6-(pyridoxal phosphate)lysine.

Belongs to the trans-sulfuration enzymes family. Pyridoxal 5'-phosphate is required as a cofactor.

It carries out the reaction O-acetyl-L-homoserine + hydrogen sulfide = L-homocysteine + acetate. It functions in the pathway amino-acid biosynthesis; L-methionine biosynthesis via de novo pathway; L-homocysteine from O-acetyl-L-homoserine: step 1/1. Feedback inhibited at very high concentrations of methionine or S-adenosylmethionine. Its function is as follows. Catalyzes the conversion of O-acetyl-L-homoserine (OAH) into homocysteine in the methionine biosynthesis pathway. Can also use O-succinyl-homoserine (OSH), although at low efficiency. The sequence is that of O-acetyl-L-homoserine sulfhydrylase from Leptospira meyeri.